A 497-amino-acid chain; its full sequence is Aspartyl/glutamyl-tRNA(Asn/Gln) amidotransferase subunit B (497 aa).

The protein belongs to the GatB/GatE family. GatB subfamily. Heterotrimer of A, B and C subunits.

It carries out the reaction L-glutamyl-tRNA(Gln) + L-glutamine + ATP + H2O = L-glutaminyl-tRNA(Gln) + L-glutamate + ADP + phosphate + H(+). It catalyses the reaction L-aspartyl-tRNA(Asn) + L-glutamine + ATP + H2O = L-asparaginyl-tRNA(Asn) + L-glutamate + ADP + phosphate + 2 H(+). Allows the formation of correctly charged Asn-tRNA(Asn) or Gln-tRNA(Gln) through the transamidation of misacylated Asp-tRNA(Asn) or Glu-tRNA(Gln) in organisms which lack either or both of asparaginyl-tRNA or glutaminyl-tRNA synthetases. The reaction takes place in the presence of glutamine and ATP through an activated phospho-Asp-tRNA(Asn) or phospho-Glu-tRNA(Gln). In Nocardioides sp. (strain ATCC BAA-499 / JS614), this protein is Aspartyl/glutamyl-tRNA(Asn/Gln) amidotransferase subunit B.